We begin with the raw amino-acid sequence, 427 residues long: Pectin acetylesterase 5 (427 aa).

The signal sequence occupies residues 1–35 (MAIPRFSSLLRCRKWAKSDWLVASIGCVLIVFFLS). N-linked (GlcNAc...) asparagine glycosylation occurs at asparagine 173. Catalysis depends on charge relay system residues serine 209, aspartate 305, and histidine 372. N-linked (GlcNAc...) asparagine glycosylation occurs at asparagine 391.

It belongs to the pectinacetylesterase family.

It localises to the secreted. Its subcellular location is the cell wall. Functionally, hydrolyzes acetyl esters in homogalacturonan regions of pectin. In type I primary cell wall, galacturonic acid residues of pectin can be acetylated at the O-2 and O-3 positions. Decreasing the degree of acetylation of pectin gels in vitro alters their physical properties. The protein is Pectin acetylesterase 5 of Arabidopsis thaliana (Mouse-ear cress).